The primary structure comprises 460 residues: Argininosuccinate lyase (460 aa).

This sequence belongs to the lyase 1 family. Argininosuccinate lyase subfamily.

Its subcellular location is the cytoplasm. It carries out the reaction 2-(N(omega)-L-arginino)succinate = fumarate + L-arginine. Its pathway is amino-acid biosynthesis; L-arginine biosynthesis; L-arginine from L-ornithine and carbamoyl phosphate: step 3/3. This is Argininosuccinate lyase from Parvibaculum lavamentivorans (strain DS-1 / DSM 13023 / NCIMB 13966).